A 398-amino-acid chain; its full sequence is Probable sugar efflux transporter (398 aa).

A run of 12 helical transmembrane segments spans residues 15-35 (VVTLAIAAFIFNTTEFVPVGL), 50-70 (VGIMLTIYAWVVALMSLPFML), 81-101 (LIGLFVLFIASHVLSFLAWNF), 103-123 (VLVISRIGIAFAHAIFWSITA), 136-156 (AQALSLLATGTALAMVLGLPI), 169-189 (TFFAIGLGALITLLCLIKLLP), 209-229 (PALMSIYLLTVVVVTAHYTAY), 246-266 (FATVLLLILGGAGIIGSVLFG), 275-295 (LLVSSAIGLLLACLLLLMPAA), 301-321 (LAILSIFWGVAIMIIGLGMQV), 333-353 (VAMSLFSGIFNIGIGAGALVG), and 364-384 (AIGYLGAIPALAALIWSILIF).

The protein belongs to the major facilitator superfamily. SotB (TC 2.A.1.2) family.

It is found in the cell inner membrane. Functionally, involved in the efflux of sugars. The physiological role may be the reduction of the intracellular concentration of toxic sugars or sugar metabolites. This chain is Probable sugar efflux transporter, found in Enterobacter sp. (strain 638).